The sequence spans 386 residues: Galactokinase (386 aa).

Substrate is bound at residue 35 to 38 (EHTD). ATP-binding positions include Ser-69 and 125–131 (GAGLSSS). Residues Ser-131 and Glu-163 each coordinate Mg(2+). Catalysis depends on Asp-175, which acts as the Proton acceptor. Tyr-224 is a binding site for substrate.

The protein belongs to the GHMP kinase family. GalK subfamily.

Its subcellular location is the cytoplasm. It carries out the reaction alpha-D-galactose + ATP = alpha-D-galactose 1-phosphate + ADP + H(+). The protein operates within carbohydrate metabolism; galactose metabolism. Its function is as follows. Catalyzes the transfer of the gamma-phosphate of ATP to D-galactose to form alpha-D-galactose-1-phosphate (Gal-1-P). This Vibrio parahaemolyticus serotype O3:K6 (strain RIMD 2210633) protein is Galactokinase.